A 151-amino-acid chain; its full sequence is D-aminoacyl-tRNA deacylase (151 aa).

The Gly-cisPro motif, important for rejection of L-amino acids motif lies at 137–138 (GP).

The protein belongs to the DTD family. In terms of assembly, homodimer.

Its subcellular location is the cytoplasm. It catalyses the reaction glycyl-tRNA(Ala) + H2O = tRNA(Ala) + glycine + H(+). The catalysed reaction is a D-aminoacyl-tRNA + H2O = a tRNA + a D-alpha-amino acid + H(+). An aminoacyl-tRNA editing enzyme that deacylates mischarged D-aminoacyl-tRNAs. Also deacylates mischarged glycyl-tRNA(Ala), protecting cells against glycine mischarging by AlaRS. Acts via tRNA-based rather than protein-based catalysis; rejects L-amino acids rather than detecting D-amino acids in the active site. By recycling D-aminoacyl-tRNA to D-amino acids and free tRNA molecules, this enzyme counteracts the toxicity associated with the formation of D-aminoacyl-tRNA entities in vivo and helps enforce protein L-homochirality. This Azoarcus sp. (strain BH72) protein is D-aminoacyl-tRNA deacylase.